A 468-amino-acid chain; its full sequence is Peroxisome proliferator-activated receptor alpha (468 aa).

Positions 1-20 (MVDTESQICPLSPFGDDDLE) are disordered. A DNA-binding region (nuclear receptor) is located at residues 99–173 (NIECRICGDK…DGMSHNAIRF (75 aa)). 2 consecutive NR C4-type zinc fingers follow at residues 102 to 122 (CRICGDKASGYHYGVHACEGC) and 139 to 161 (CDRSCKIQKKNRNKCQYCRFQKC). Residues 239-466 (FVIHDMETLC…HPLLQEIYRD (228 aa)) enclose the NR LBD domain. The tract at residues 304–433 (DQVTLLKYGV…PKLLQKMADL (130 aa)) is required for heterodimerization with RXRA.

The protein belongs to the nuclear hormone receptor family. NR1 subfamily. As to quaternary structure, heterodimer; with RXRA. This heterodimerization is required for DNA binding and transactivation activity. Interacts with NCOA3 coactivator. Interacts with CITED2; the interaction stimulates its transcriptional activity. Also interacts with PPARBP in vitro. Interacts with AKAP13, LPIN1, PRDM16 and coactivator NCOA6. Interacts with ASXL1 and ASXL2. Interacts with PER2. Interacts with SIRT1; the interaction seems to be modulated by NAD(+) levels. Interacts with CRY1 and CRY2. In hepatocytes, interacts with PAQR3 and HUWE1; the interactions promote PPARA poylubiquitination and HUWE1-mediated degradation. Post-translationally, ubiquitinated by E3 ubiquitin-protein ligase HUWE1; leading to proteasomal degradation. In terms of processing, phosphorylated.

The protein localises to the nucleus. Functionally, ligand-activated transcription factor. Key regulator of lipid metabolism. Activated by the endogenous ligand 1-palmitoyl-2-oleoyl-sn-glycerol-3-phosphocholine (16:0/18:1-GPC). Activated by oleylethanolamide, a naturally occurring lipid that regulates satiety. Receptor for peroxisome proliferators such as hypolipidemic drugs and fatty acids. Regulates the peroxisomal beta-oxidation pathway of fatty acids. Functions as a transcription activator for the ACOX1 and P450 genes. Transactivation activity requires heterodimerization with RXRA and is antagonized by NR2C2. May be required for the propagation of clock information to metabolic pathways regulated by PER2. The chain is Peroxisome proliferator-activated receptor alpha (PPARA) from Phascolarctos cinereus (Koala).